The chain runs to 391 residues: Elongation factor Tu (391 aa).

The 192-residue stretch at 10 to 201 (KPHVNIGTIG…AVDEFIPTPE (192 aa)) folds into the tr-type G domain. The tract at residues 19-26 (GHVDHGKT) is G1. GTP is bound at residue 19–26 (GHVDHGKT). Thr-26 is a Mg(2+) binding site. Positions 55–59 (GITIS) are G2. A G3 region spans residues 76 to 79 (DCPG). Residues 76-80 (DCPGH) and 131-134 (NKVD) contribute to the GTP site. The tract at residues 131–134 (NKVD) is G4. The segment at 169–171 (SAL) is G5.

This sequence belongs to the TRAFAC class translation factor GTPase superfamily. Classic translation factor GTPase family. EF-Tu/EF-1A subfamily. In terms of assembly, monomer.

Its subcellular location is the cytoplasm. The enzyme catalyses GTP + H2O = GDP + phosphate + H(+). GTP hydrolase that promotes the GTP-dependent binding of aminoacyl-tRNA to the A-site of ribosomes during protein biosynthesis. This chain is Elongation factor Tu, found in Roseobacter denitrificans (strain ATCC 33942 / OCh 114) (Erythrobacter sp. (strain OCh 114)).